The chain runs to 113 residues: Teretoxin Tan14.1 (113 aa).

Residues 1 to 21 form the signal peptide; the sequence is MALEAQMTLRMFVLVAMASTV. Positions 22–86 are excised as a propeptide; it reads HVLSSSFSED…DETSSRTGKR (65 aa).

This sequence belongs to the teretoxin N (TN) superfamily. Post-translationally, contains 2 disulfide bonds. In terms of tissue distribution, expressed by the venom duct.

The protein resides in the secreted. The protein is Teretoxin Tan14.1 of Terebra anilis (Auger snail).